The chain runs to 350 residues: Protein RecA (350 aa).

Position 65–72 (65–72) interacts with ATP; sequence GPESSGKT. The segment at 326-350 is disordered; it reads HNLKTRNTADSKVTGAKDEKSKEEK. Positions 340–350 are enriched in basic and acidic residues; sequence GAKDEKSKEEK.

The protein belongs to the RecA family.

It is found in the cytoplasm. Its function is as follows. Can catalyze the hydrolysis of ATP in the presence of single-stranded DNA, the ATP-dependent uptake of single-stranded DNA by duplex DNA, and the ATP-dependent hybridization of homologous single-stranded DNAs. It interacts with LexA causing its activation and leading to its autocatalytic cleavage. This Clostridium novyi (strain NT) protein is Protein RecA.